Here is a 206-residue protein sequence, read N- to C-terminus: Imidazoleglycerol-phosphate dehydratase (206 aa).

The segment at 1 to 24 (MDPTASGRQAPRNPRQATVQRETK) is disordered.

This sequence belongs to the imidazoleglycerol-phosphate dehydratase family.

It is found in the cytoplasm. The enzyme catalyses D-erythro-1-(imidazol-4-yl)glycerol 3-phosphate = 3-(imidazol-4-yl)-2-oxopropyl phosphate + H2O. Its pathway is amino-acid biosynthesis; L-histidine biosynthesis; L-histidine from 5-phospho-alpha-D-ribose 1-diphosphate: step 6/9. In Acidothermus cellulolyticus (strain ATCC 43068 / DSM 8971 / 11B), this protein is Imidazoleglycerol-phosphate dehydratase.